Consider the following 182-residue polypeptide: NADH-quinone oxidoreductase subunit I (182 aa).

4Fe-4S ferredoxin-type domains are found at residues 52–82 and 92–121; these read LTRDPDGEERCVACNLCAVACPVGCISLQKA and EFFRINFSRCIFCGLCEEACPTTAIQLTPD. 8 residues coordinate [4Fe-4S] cluster: C62, C65, C68, C72, C101, C104, C107, and C111.

It belongs to the complex I 23 kDa subunit family. NDH-1 is composed of 13 different subunits. Subunits NuoA, H, J, K, L, M, N constitute the membrane sector of the complex. [4Fe-4S] cluster serves as cofactor.

The protein localises to the cell inner membrane. It carries out the reaction a quinone + NADH + 5 H(+)(in) = a quinol + NAD(+) + 4 H(+)(out). NDH-1 shuttles electrons from NADH, via FMN and iron-sulfur (Fe-S) centers, to quinones in the respiratory chain. The immediate electron acceptor for the enzyme in this species is believed to be ubiquinone. Couples the redox reaction to proton translocation (for every two electrons transferred, four hydrogen ions are translocated across the cytoplasmic membrane), and thus conserves the redox energy in a proton gradient. The chain is NADH-quinone oxidoreductase subunit I from Pseudomonas putida (strain ATCC 47054 / DSM 6125 / CFBP 8728 / NCIMB 11950 / KT2440).